The following is a 127-amino-acid chain: Large ribosomal subunit protein uL18 (127 aa).

Belongs to the universal ribosomal protein uL18 family. In terms of assembly, part of the 50S ribosomal subunit; part of the 5S rRNA/L5/L18/L25 subcomplex. Contacts the 5S and 23S rRNAs.

Functionally, this is one of the proteins that bind and probably mediate the attachment of the 5S RNA into the large ribosomal subunit, where it forms part of the central protuberance. The sequence is that of Large ribosomal subunit protein uL18 from Streptomyces coelicolor (strain ATCC BAA-471 / A3(2) / M145).